The chain runs to 213 residues: Thymidylate kinase (213 aa).

Position 10–17 (10–17 (GLEGAGKT)) interacts with ATP.

Belongs to the thymidylate kinase family.

The enzyme catalyses dTMP + ATP = dTDP + ADP. Phosphorylation of dTMP to form dTDP in both de novo and salvage pathways of dTTP synthesis. The polypeptide is Thymidylate kinase (Enterobacter sp. (strain 638)).